The following is a 1135-amino-acid chain: Integrin alpha-7 (1135 aa).

The signal sequence occupies residues 1–33 (MARIPRCDFLGLPGICYLLSFLLAGLLLPRASA). Topologically, residues 34–1036 (FNLDVMGAIR…VAVVAEGVPW (1003 aa)) are extracellular. 7 FG-GAP repeats span residues 38–103 (VMGA…ETDC), 110–165 (RGAN…RCFV), 185–238 (EGRP…DPDQ), 248–305 (DRLT…ASRL), 306–367 (IPEV…HWAD), 368–423 (ISPL…GVVT), and 427–486 (QVLE…IDPR). An N-linked (GlcNAc...) asparagine glycan is attached at Asn86. 3 disulfides stabilise this stretch: Cys94-Cys103, Cys140-Cys163, and Cys184-Cys197. Ca(2+) contacts are provided by Asp328, Asn330, Asp332, Asp336, Asp390, Asn392, Asp394, Asp398, Asp448, Asp450, Asn452, Tyr454, and Asp456. 6 disulfides stabilise this stretch: Cys495/Cys502, Cys508/Cys571, Cys637/Cys643, Cys736/Cys747, Cys894/Cys948, and Cys955/Cys960. Asn741 carries an N-linked (GlcNAc...) asparagine glycan. Positions 905-916 (VDSRDRRRRELG) are enriched in basic and acidic residues. Residues 905 to 933 (VDSRDRRRRELGQPEPQEPPEKVEPSTSW) are disordered. N-linked (GlcNAc...) asparagine glycosylation occurs at Asn943. 2 N-linked (GlcNAc...) asparagine glycosylation sites follow: Asn979 and Asn999. A helical transmembrane segment spans residues 1037–1057 (WVILLAVLAGLLVLALLVLLL). Topologically, residues 1058-1135 (WKLGFFKRAK…PDGHPVSVTA (78 aa)) are cytoplasmic. Residues 1061–1065 (GFFKR) carry the GFFKR motif motif. Tandem repeats lie at residues 1111–1114 (DAHP), 1119–1122 (DWHP), and 1127–1130 (DGHP). The segment at 1111-1130 (DAHPILAADWHPELGPDGHP) is 3 X 4 AA repeats of D-X-H-P.

The protein belongs to the integrin alpha chain family. Interacts (via C-terminus intracellular tail region) with CIB1; the interaction is stabilized/increased in a calcium- and magnesium-dependent manner. Heterodimer of an alpha and a beta subunit. The alpha subunit is composed of a heavy and a light chain linked by a disulfide bond. Alpha-7 associates with beta-1. Interacts with COMP. ADP-ribosylated on at least two sites of the extracellular domain in skeletal myotubes. Post-translationally, a 70 kDa form is created by proteolytic cleavage. Cleavage is elevated during myogenic differentiation and the cleaved form enhances cell adhesion and spreading on laminin. Expressed in skeletal and cardiac muscle. Expressed in replicating myoblasts. In differentiated muscle fibers localizes between fibers and the surrounding matrix. Isoform Alpha-7X1A and isoform Alpha-7X1B are expressed at myotendinous and neuromuscular junctions; isoform Alpha-7X1C is expressed at neuromuscular junctions and at extrasynaptic sites.

It is found in the membrane. Its function is as follows. Integrin alpha-7/beta-1 is the primary laminin receptor on skeletal myoblasts and adult myofibers. During myogenic differentiation, it may induce changes in the shape and mobility of myoblasts, and facilitate their localization at laminin-rich sites of secondary fiber formation. Involved in the maintenance of the myofibers cytoarchitecture as well as for their anchorage, viability and functional integrity. Required to promote contractile phenotype acquisition in differentiated airway smooth muscle (ASM) cells. Acts as a Schwann cell receptor for laminin-2. Acts as a receptor of COMP and mediates its effect on vascular smooth muscle cells (VSMCs) maturation. The chain is Integrin alpha-7 (Itga7) from Rattus norvegicus (Rat).